We begin with the raw amino-acid sequence, 145 residues long: Cell wall teichoic acid glycosylation protein GtcA (145 aa).

The next 4 helical transmembrane spans lie at 21-41, 45-65, 91-111, and 122-142; these read IFMYLIMGGFTTIINIVTFWL, ILNWDYRIANTIAFIASVLFA, FFGFRCLTYIIDILVMILLIS, and IWTNIIVLVLNYVFSKWIIFK.

The protein belongs to the GtrA family.

It is found in the cell membrane. Its function is as follows. Involved in the decoration of cell wall teichoic acid with galactose and glucose. This is Cell wall teichoic acid glycosylation protein GtcA (gtcA) from Listeria monocytogenes.